Here is a 234-residue protein sequence, read N- to C-terminus: Sperm-associated microtubule inner protein 5 (234 aa).

In terms of assembly, microtubule inner protein component of sperm flagellar doublet microtubules. As to expression, expressed in testis (at protein level). Strongly expressed in peritubular cells and Leydig cells and weakly expressed in the cytoplasm of spermatocytes.

It is found in the cytoplasm. The protein localises to the cytoskeleton. It localises to the flagellum axoneme. The protein resides in the nucleus. Microtubule inner protein (MIP) part of the dynein-decorated doublet microtubules (DMTs) in flagellum axoneme. May serve to reinforce and thus stabilize the microtubule structure in the sperm flagella. This Homo sapiens (Human) protein is Sperm-associated microtubule inner protein 5.